Reading from the N-terminus, the 152-residue chain is Ribosome maturation factor RimP (152 aa).

This sequence belongs to the RimP family.

The protein resides in the cytoplasm. Its function is as follows. Required for maturation of 30S ribosomal subunits. The protein is Ribosome maturation factor RimP of Idiomarina loihiensis (strain ATCC BAA-735 / DSM 15497 / L2-TR).